Reading from the N-terminus, the 337-residue chain is Mating-type protein MAT-2 (337 aa).

A DNA-binding region (HMG box) is located at residues 125-193 (APRPMNCWII…EHLRQHPNYK (69 aa)). Positions 171 to 219 (KRPWQDAAQSAKEEHLRQHPNYKYTPRKPGEKKKRQSRKSKRAAATTTA) are disordered. Residues 200–212 (GEKKKRQSRKSKR) show a composition bias toward basic residues.

The protein localises to the nucleus. This is Mating-type protein MAT-2 (MAT2) from Cochliobolus sativus (Common root rot and spot blotch fungus).